Reading from the N-terminus, the 629-residue chain is tRNA uridine 5-carboxymethylaminomethyl modification enzyme MnmG (629 aa).

13–18 (GGGHAG) is a binding site for FAD. Residue 273-287 (GPRYCPSIEDKIVRF) participates in NAD(+) binding.

Belongs to the MnmG family. In terms of assembly, homodimer. Heterotetramer of two MnmE and two MnmG subunits. Requires FAD as cofactor.

The protein resides in the cytoplasm. Functionally, NAD-binding protein involved in the addition of a carboxymethylaminomethyl (cmnm) group at the wobble position (U34) of certain tRNAs, forming tRNA-cmnm(5)s(2)U34. This is tRNA uridine 5-carboxymethylaminomethyl modification enzyme MnmG from Marinomonas sp. (strain MWYL1).